The sequence spans 358 residues: UDP-N-acetylglucosamine--N-acetylmuramyl-(pentapeptide) pyrophosphoryl-undecaprenol N-acetylglucosamine transferase (358 aa).

UDP-N-acetyl-alpha-D-glucosamine-binding positions include 10–12 (TGG), Asn-124, Ser-196, and Gln-293.

This sequence belongs to the glycosyltransferase 28 family. MurG subfamily.

The protein resides in the cell membrane. It catalyses the reaction di-trans,octa-cis-undecaprenyl diphospho-N-acetyl-alpha-D-muramoyl-L-alanyl-D-glutamyl-meso-2,6-diaminopimeloyl-D-alanyl-D-alanine + UDP-N-acetyl-alpha-D-glucosamine = di-trans,octa-cis-undecaprenyl diphospho-[N-acetyl-alpha-D-glucosaminyl-(1-&gt;4)]-N-acetyl-alpha-D-muramoyl-L-alanyl-D-glutamyl-meso-2,6-diaminopimeloyl-D-alanyl-D-alanine + UDP + H(+). The protein operates within cell wall biogenesis; peptidoglycan biosynthesis. Cell wall formation. Catalyzes the transfer of a GlcNAc subunit on undecaprenyl-pyrophosphoryl-MurNAc-pentapeptide (lipid intermediate I) to form undecaprenyl-pyrophosphoryl-MurNAc-(pentapeptide)GlcNAc (lipid intermediate II). This chain is UDP-N-acetylglucosamine--N-acetylmuramyl-(pentapeptide) pyrophosphoryl-undecaprenol N-acetylglucosamine transferase, found in Exiguobacterium sp. (strain ATCC BAA-1283 / AT1b).